We begin with the raw amino-acid sequence, 353 residues long: UPF0421 protein YgaE (353 aa).

4 helical membrane passes run 20 to 40 (LASW…IFAI), 67 to 87 (VFGL…VIVI), 103 to 123 (LVTV…FALI), and 125 to 145 (TSTV…FLPP).

This sequence belongs to the UPF0421 family.

The protein resides in the cell membrane. The chain is UPF0421 protein YgaE (ygaE) from Bacillus subtilis (strain 168).